The chain runs to 393 residues: Dual-specificity RNA methyltransferase RlmN (393 aa).

The tract at residues 1–22 (MSEQLLSELSPVAATSPSPAPA) is disordered. The segment covering 10–22 (SPVAATSPSPAPA) has biased composition (low complexity). The Proton acceptor role is filled by Glu-114. A Radical SAM core domain is found at 120–358 (EDDRATLCVS…TTIVRKTRGD (239 aa)). Cys-127 and Cys-364 are disulfide-bonded. Residues Cys-134, Cys-138, and Cys-141 each contribute to the [4Fe-4S] cluster site. S-adenosyl-L-methionine-binding positions include 188-189 (GE), Ser-220, 242-244 (SLH), and Asn-321. Cys-364 acts as the S-methylcysteine intermediate in catalysis.

The protein belongs to the radical SAM superfamily. RlmN family. [4Fe-4S] cluster serves as cofactor.

Its subcellular location is the cytoplasm. The catalysed reaction is adenosine(2503) in 23S rRNA + 2 reduced [2Fe-2S]-[ferredoxin] + 2 S-adenosyl-L-methionine = 2-methyladenosine(2503) in 23S rRNA + 5'-deoxyadenosine + L-methionine + 2 oxidized [2Fe-2S]-[ferredoxin] + S-adenosyl-L-homocysteine. The enzyme catalyses adenosine(37) in tRNA + 2 reduced [2Fe-2S]-[ferredoxin] + 2 S-adenosyl-L-methionine = 2-methyladenosine(37) in tRNA + 5'-deoxyadenosine + L-methionine + 2 oxidized [2Fe-2S]-[ferredoxin] + S-adenosyl-L-homocysteine. In terms of biological role, specifically methylates position 2 of adenine 2503 in 23S rRNA and position 2 of adenine 37 in tRNAs. m2A2503 modification seems to play a crucial role in the proofreading step occurring at the peptidyl transferase center and thus would serve to optimize ribosomal fidelity. The chain is Dual-specificity RNA methyltransferase RlmN from Sodalis glossinidius (strain morsitans).